The sequence spans 85 residues: Beta-insect depressant toxin BmKITb (85 aa).

The signal sequence occupies residues 1–21; that stretch reads MKLFLLLVISASMLIDGLVNA. The 61-residue stretch at 22 to 82 folds into the LCN-type CS-alpha/beta domain; that stretch reads DGYIRGSNGC…TWKSESNTCG (61 aa). Cystine bridges form between Cys-31–Cys-81, Cys-35–Cys-56, Cys-42–Cys-63, and Cys-46–Cys-65. Position 82 is a glycine amide (Gly-82).

Expressed by the venom gland.

The protein localises to the secreted. Its function is as follows. Depressant insect beta-toxins cause a transient contraction paralysis followed by a slow flaccid paralysis. They bind voltage-independently at site-4 of sodium channels (Nav) and shift the voltage of activation toward more negative potentials thereby affecting sodium channel activation and promoting spontaneous and repetitive firing. However, this toxin has some characteristics of excitatory toxins such as bursts of activity after the membrane has been hyperpolarized. This toxin is active only on insects. The polypeptide is Beta-insect depressant toxin BmKITb (Olivierus martensii (Manchurian scorpion)).